The sequence spans 65 residues: Crotamine (65 aa).

The first 22 residues, 1-22 (MKILYLLFAFLFLAFLSEPGNA), serve as a signal peptide directing secretion. 2 short sequence motifs (nuclear localization signal) span residues 24–40 (KQCHKKGGHCFPKEKIC) and 49–61 (KMDCRWRWKCCKK). 3 disulfide bridges follow: Cys-26/Cys-58, Cys-33/Cys-52, and Cys-40/Cys-59.

It belongs to the crotamine-myotoxin family. Monomer. In terms of tissue distribution, expressed by the venom gland.

It localises to the secreted. Cationic peptide that possesses multiple functions. It acts as a cell-penetrating peptide (CPP), and as a potent voltage-gated potassium channel inhibitor. It exhibits antimicrobial activities, hind limb paralysis, and severe muscle necrosis by a non-enzymatic mechanism. As a cell-penetrating peptide, crotamine has high specificity for actively proliferating cells, and interacts inside the cell with subcellular and subnuclear structures, like vesicular compartments, chromosomes and centrioles. It penetrates into the cells as fast as five minutes after its addition to cell culture medium. In vivo, after intraperitoneal administration, it is found in cells of peritoneal fluid and bone marrow, demonstrating preferential nuclear and perinuclear localization. To enter the cell, it interacts with the chains of heparan sulfate membrane proteoglycan (HSPG), and is endocytosed (in complex with HSPG) in vesicles which are transported into the cell with the help of clathrin. Inside the cell, crotamine accumulates in lysosomal vesicles. As soon as the peptide accumulates in endosomes/lysosomes vesicles, these compartments are disrupted and their contents released into the cytosol. This loss of lysosomal content induces cell death at high concentrations, or promotes the distribution of crotamine in cytoplasmic compartments, which is a step before crotamine nuclear uptake. As a potassium channel inhibitor, this toxin selectively inhibits Kv1.1/KCNA1, Kv1.2/KCNA2 and Kv1.3/KCNA3 channels with an IC(50) of 369, 386 and 287 nM, respectively. The inhibition of Kv1.3/KCNA channels induced by this toxin occurs rapidly and is voltage-independent. The channel inhibition is reversible after washing, suggesting a pure and classical channel blockage effect, without effects in potassium channel kinetics. As an antimicrobial peptide, crotamine shows antibacterial activity against E.coli and B.subtilis, and antifungal activity against Candida spp., Trichosporon spp. and C.neoformans. It kills bacteria through membrane permeabilization. In Crotalus durissus terrificus (South American rattlesnake), this protein is Crotamine (CRO2).